A 465-amino-acid polypeptide reads, in one-letter code: Ribulose bisphosphate carboxylase large chain (465 aa).

Lys-4 carries the N6,N6,N6-trimethyllysine modification. Thr-163 lines the substrate pocket. Lys-165 functions as the Proton acceptor in the catalytic mechanism. Lys-167 contributes to the substrate binding site. The Mg(2+) site is built by Lys-191, Asp-193, and Glu-194. Lys-191 bears the N6-carboxylysine mark. Residue His-284 is the Proton acceptor of the active site. Positions 285, 317, and 369 each coordinate substrate.

The protein belongs to the RuBisCO large chain family. Type I subfamily. As to quaternary structure, heterohexadecamer of 8 large chains and 8 small chains; disulfide-linked. The disulfide link is formed within the large subunit homodimers. Mg(2+) serves as cofactor. In terms of processing, the disulfide bond which can form in the large chain dimeric partners within the hexadecamer appears to be associated with oxidative stress and protein turnover.

It is found in the plastid. The protein localises to the chloroplast. It carries out the reaction 2 (2R)-3-phosphoglycerate + 2 H(+) = D-ribulose 1,5-bisphosphate + CO2 + H2O. The catalysed reaction is D-ribulose 1,5-bisphosphate + O2 = 2-phosphoglycolate + (2R)-3-phosphoglycerate + 2 H(+). Functionally, ruBisCO catalyzes two reactions: the carboxylation of D-ribulose 1,5-bisphosphate, the primary event in carbon dioxide fixation, as well as the oxidative fragmentation of the pentose substrate in the photorespiration process. Both reactions occur simultaneously and in competition at the same active site. In Trochodendron aralioides (Wheel tree), this protein is Ribulose bisphosphate carboxylase large chain.